A 285-amino-acid polypeptide reads, in one-letter code: MRIVVITGMSGSGKSTAVRALEDEGFYCIDNLPVRLFRQFVELIEKSGESFKGVVLVTDIRGRDLSTGIVESFRELRSVGHELEVLFFDASDEVLIRRFAETRRRHPADEHCTVPEGIRIERERLAALRQNATLIIDTSEFNVHQLKEQVIRAIKGEQGSSNFTVEVVSFGFRYGVPLDASLVMDVRFLPNPHFVPALRPYSGQEPAVRQFVLEQPDTTAFLDHFFNLLQFLIPAYCREGKSYLTIAIGCTGGRHRSVAITEATAARLETLGLKVRISHRDIEKG.

8–15 (GMSGSGKS) is a binding site for ATP. 59 to 62 (DIRG) provides a ligand contact to GTP.

The protein belongs to the RapZ-like family.

Its function is as follows. Displays ATPase and GTPase activities. The sequence is that of Nucleotide-binding protein Glov_2163 from Trichlorobacter lovleyi (strain ATCC BAA-1151 / DSM 17278 / SZ) (Geobacter lovleyi).